A 418-amino-acid polypeptide reads, in one-letter code: Serine hydroxymethyltransferase (418 aa).

(6S)-5,6,7,8-tetrahydrofolate contacts are provided by residues leucine 121 and 125–127 (GHL). At lysine 230 the chain carries N6-(pyridoxal phosphate)lysine. Position 356–358 (356–358 (SPF)) interacts with (6S)-5,6,7,8-tetrahydrofolate.

Belongs to the SHMT family. As to quaternary structure, homodimer. Pyridoxal 5'-phosphate serves as cofactor.

It is found in the cytoplasm. It carries out the reaction (6R)-5,10-methylene-5,6,7,8-tetrahydrofolate + glycine + H2O = (6S)-5,6,7,8-tetrahydrofolate + L-serine. The protein operates within one-carbon metabolism; tetrahydrofolate interconversion. Its pathway is amino-acid biosynthesis; glycine biosynthesis; glycine from L-serine: step 1/1. Its function is as follows. Catalyzes the reversible interconversion of serine and glycine with tetrahydrofolate (THF) serving as the one-carbon carrier. This reaction serves as the major source of one-carbon groups required for the biosynthesis of purines, thymidylate, methionine, and other important biomolecules. Also exhibits THF-independent aldolase activity toward beta-hydroxyamino acids, producing glycine and aldehydes, via a retro-aldol mechanism. This Shewanella piezotolerans (strain WP3 / JCM 13877) protein is Serine hydroxymethyltransferase.